A 139-amino-acid chain; its full sequence is D-ribose pyranase (139 aa).

The active-site Proton donor is His-20. Residues Asp-28, His-106, and 128-130 (YAN) each bind substrate.

It belongs to the RbsD / FucU family. RbsD subfamily. In terms of assembly, homodecamer.

It localises to the cytoplasm. It catalyses the reaction beta-D-ribopyranose = beta-D-ribofuranose. Its pathway is carbohydrate metabolism; D-ribose degradation; D-ribose 5-phosphate from beta-D-ribopyranose: step 1/2. Functionally, catalyzes the interconversion of beta-pyran and beta-furan forms of D-ribose. This chain is D-ribose pyranase, found in Proteus mirabilis (strain HI4320).